The sequence spans 124 residues: Small ribosomal subunit protein bS6 (124 aa).

The tract at residues 100-124 is disordered; it reads KERRAARQKTGETQENVSQEESSTN. Polar residues predominate over residues 110-124; sequence GETQENVSQEESSTN.

This sequence belongs to the bacterial ribosomal protein bS6 family.

In terms of biological role, binds together with bS18 to 16S ribosomal RNA. The polypeptide is Small ribosomal subunit protein bS6 (Fervidobacterium nodosum (strain ATCC 35602 / DSM 5306 / Rt17-B1)).